Consider the following 146-residue polypeptide: ALTEPQKTALKDSWKLLAGDGKTMMKSGALLFGLLFKSHPDTKKHFKHFDDATFATMDTGVGKAHGMAVFTGLGAFVSSIDDDACVNGLAKKLSRNHTARGITADDFKLLQGVFKTFLDEATGKKATNEHKAAWDALLTMLIKAHS.

N-acetylalanine is present on Ala1. Residues 1 to 146 enclose the Globin domain; the sequence is ALTEPQKTAL…LLTMLIKAHS (146 aa). Positions 65 and 97 each coordinate heme b.

The protein belongs to the globin family. As to quaternary structure, homodimer.

This chain is Globin, found in Buccinum undatum (Common whelk).